Consider the following 431-residue polypeptide: Ribosomal RNA small subunit methyltransferase B (431 aa).

Residues 254–260 (CAAPGGK), D277, D303, and D322 contribute to the S-adenosyl-L-methionine site. C375 (nucleophile) is an active-site residue. The disordered stretch occupies residues 398–417 (LHATGTPASPGQQNLPGPEE). The span at 403–412 (TPASPGQQNL) shows a compositional bias: polar residues.

The protein belongs to the class I-like SAM-binding methyltransferase superfamily. RsmB/NOP family.

The protein resides in the cytoplasm. It carries out the reaction cytidine(967) in 16S rRNA + S-adenosyl-L-methionine = 5-methylcytidine(967) in 16S rRNA + S-adenosyl-L-homocysteine + H(+). Specifically methylates the cytosine at position 967 (m5C967) of 16S rRNA. This Klebsiella pneumoniae (strain 342) protein is Ribosomal RNA small subunit methyltransferase B.